A 97-amino-acid polypeptide reads, in one-letter code: C-C motif chemokine 7 (97 aa).

The N-terminal stretch at 1 to 23 (MRISATLLCLLLIAAAFSIQVWA) is a signal peptide. At glutamine 24 the chain carries Pyrrolidone carboxylic acid. The N-linked (GlcNAc...) asparagine glycan is linked to asparagine 29. 2 disulfide bridges follow: cysteine 33–cysteine 57 and cysteine 34–cysteine 73.

Belongs to the intercrine beta (chemokine CC) family. Monomer. Interacts with TNFAIP6 (via Link domain).

The protein resides in the secreted. Chemotactic factor that attracts monocytes and eosinophils, but not neutrophils. Augments monocyte anti-tumor activity. The chain is C-C motif chemokine 7 (Ccl7) from Mus musculus (Mouse).